A 988-amino-acid polypeptide reads, in one-letter code: MSFALEETLESDWVAVRPHVFDEREKHKFVFIVAWNEIEGKFAITCHNRTAQRQRSGSREQAGARGGAEAGGAASDGSRGPGSPAGRGRPEATASATLVRSPGPRRSSAWAEGGSPRSTRSLLGDPRLRSPGSKGAESRLRSPVRAKPIPGQKTSEADDAAGAAAAAARPAPREAQVSSVRIVSASGTVSEEIEVLEMVKEDEAPLALSDAEQPPPATELESPAEECSWAGLFSFQDLRAVHQQLCSVNSQLEPCLPVFPEEPSGMWTVLFGGAPEMTEQEIDTLCYQLQVYLGHGLDTCGWKILSQVLFTETDDPEEYYESLSELRQKGYEEVLQRARKRIQELLDKHKNTESMVELLDLYQMEDEAYSSLAEATTELYQYLLQPFRDMRELAMLRRQQIKISMENDYLGPRRIESLQKEDADWQRKAHMAVLSIQDLTVKYFEITAKAQKAVYDRMRADQKKFGKASWAAAAERMEKLQYAVSKETLQMMRAKEICLEQRKHALKEEMQSLRGGTEAIARLDQLEADYYDLQLQLYEVQFEILKCEELLLTAQLESIKRLISEKRDEVVYYDTYESMEAMLEKEEMAASAYLQREELQKLQQKARQLEARRGRVSAKKSYLRNKKEICIAKHNEKIQQRTRIEDEYRTHHTVQLKREKLHDEEERKSAWVSQERQRTLDRLRTFKQRYPGQVILKSTRLRLAHARRKGAASPVLQEDHCDSLPSVLQVEEKTEEVGEGRVKRGPSQTTEPQSLVQLEDTSLTQLEATSLPLSGVTSELPPTISLPLLNNNLEPCSVTINPLPSPLPPTPPPPPPPPPPPPPPPLPVAKDSGPETLEKDLPRKEGNEKRIPKSASAPSAHLFDSSQLVSARKKLRKTAEGLQRRRVSSPMDEVLASLKRGSFHLKKVEQRTLPPFPDEDDSNNILAQIRKGVKLKKVQKDVLRESFTLLPDTDPLTRSIHEALRRIKEASPESEDEEEALPCTDWEN.

The segment at 1–126 (MSFALEETLE…RSTRSLLGDP (126 aa)) is interaction with p300/EP300. Residues 51-178 (AQRQRSGSRE…RPAPREAQVS (128 aa)) form a disordered region. A phosphoserine mark is found at S115 and S121. A compositionally biased stretch (low complexity) spans 160–175 (AAGAAAAAARPAPREA). Coiled-coil stretches lie at residues 324 to 360 (SELR…ELLD), 489 to 541 (LQMM…YEVQ), and 590 to 621 (ASAY…AKKS). The tract at residues 478–567 (EKLQYAVSKE…SIKRLISEKR (90 aa)) is interaction with p300/EP300. A Phosphoserine modification is found at S713. Over residues 731–742 (EEKTEEVGEGRV) the composition is skewed to basic and acidic residues. Disordered regions lie at residues 731-755 (EEKT…PQSL) and 800-865 (INPL…LFDS). Positions 746-755 (PSQTTEPQSL) are enriched in polar residues. Residues 803 to 827 (LPSPLPPTPPPPPPPPPPPPPPPLP) are compositionally biased toward pro residues. Positions 832-851 (SGPETLEKDLPRKEGNEKRI) are enriched in basic and acidic residues. The residue at position 888 (S888) is a Phosphoserine. One can recognise a WH2 domain in the interval 921 to 938 (DSNNILAQIRKGVKLKKV). Positions 967–988 (IKEASPESEDEEEALPCTDWEN) are disordered. Over residues 972–988 (PESEDEEEALPCTDWEN) the composition is skewed to acidic residues. Position 974 is a phosphoserine (S974).

The protein belongs to the JMY family. In terms of assembly, interacts with p300/EP300, the complex activates p53/TP53 transcriptional activity. Interacts with TTC5; the interaction facilitates the association between JMY and p300/EP300. Interacts with MAP1LC3B; the interaction results in the activation of JYM's nucleation activity in the cytoplasm. Interacts with TTC5/STRAP; the interaction results in the inhibition of JYM's nucleation activity in the cytoplasm due to competition with MAP1LC3B binding. Ubiquitinated by MDM2, leading to its subsequent degradation by the proteasome. In case of DNA damage, the interaction with MDM2 is altered, preventing degradation and allowing interaction with p300/EP300 and its function in p53/TP53 stress response.

Its subcellular location is the nucleus. The protein resides in the cytoplasmic vesicle. It is found in the cytoplasm. The protein localises to the cytoskeleton. It localises to the endomembrane system. Its subcellular location is the autophagosome membrane. Its function is as follows. Acts both as a nuclear p53/TP53-cofactor and a cytoplasmic regulator of actin dynamics depending on conditions. In nucleus, acts as a cofactor that increases p53/TP53 response via its interaction with p300/EP300. Increases p53/TP53-dependent transcription and apoptosis, suggesting an important role in p53/TP53 stress response such as DNA damage. In cytoplasm, acts as a nucleation-promoting factor for both branched and unbranched actin filaments. Activates the Arp2/3 complex to induce branched actin filament networks. Also catalyzes actin polymerization in the absence of Arp2/3, creating unbranched filaments. Contributes to cell motility by controlling actin dynamics. May promote the rapid formation of a branched actin network by first nucleating new mother filaments and then activating Arp2/3 to branch off these filaments. Upon nutrient stress, directly recruited by MAP1LC3B to the phagophore membrane surfaces to promote actin assembly during autophagy. The p53/TP53-cofactor and actin activator activities are regulated via its subcellular location. The polypeptide is Junction-mediating and -regulatory protein (JMY) (Homo sapiens (Human)).